We begin with the raw amino-acid sequence, 314 residues long: 4-hydroxy-3-methylbut-2-enyl diphosphate reductase (314 aa).

Cysteine 12 serves as a coordination point for [4Fe-4S] cluster. Residues histidine 41 and histidine 74 each coordinate (2E)-4-hydroxy-3-methylbut-2-enyl diphosphate. Dimethylallyl diphosphate-binding residues include histidine 41 and histidine 74. Residues histidine 41 and histidine 74 each coordinate isopentenyl diphosphate. Cysteine 96 serves as a coordination point for [4Fe-4S] cluster. A (2E)-4-hydroxy-3-methylbut-2-enyl diphosphate-binding site is contributed by histidine 124. Position 124 (histidine 124) interacts with dimethylallyl diphosphate. Histidine 124 is an isopentenyl diphosphate binding site. Glutamate 126 serves as the catalytic Proton donor. Threonine 168 serves as a coordination point for (2E)-4-hydroxy-3-methylbut-2-enyl diphosphate. Residue cysteine 198 participates in [4Fe-4S] cluster binding. Positions 226, 227, 228, and 270 each coordinate (2E)-4-hydroxy-3-methylbut-2-enyl diphosphate. Dimethylallyl diphosphate is bound by residues serine 226, serine 227, asparagine 228, and serine 270. Isopentenyl diphosphate is bound by residues serine 226, serine 227, asparagine 228, and serine 270.

Belongs to the IspH family. Requires [4Fe-4S] cluster as cofactor.

It catalyses the reaction isopentenyl diphosphate + 2 oxidized [2Fe-2S]-[ferredoxin] + H2O = (2E)-4-hydroxy-3-methylbut-2-enyl diphosphate + 2 reduced [2Fe-2S]-[ferredoxin] + 2 H(+). It carries out the reaction dimethylallyl diphosphate + 2 oxidized [2Fe-2S]-[ferredoxin] + H2O = (2E)-4-hydroxy-3-methylbut-2-enyl diphosphate + 2 reduced [2Fe-2S]-[ferredoxin] + 2 H(+). It functions in the pathway isoprenoid biosynthesis; dimethylallyl diphosphate biosynthesis; dimethylallyl diphosphate from (2E)-4-hydroxy-3-methylbutenyl diphosphate: step 1/1. Its pathway is isoprenoid biosynthesis; isopentenyl diphosphate biosynthesis via DXP pathway; isopentenyl diphosphate from 1-deoxy-D-xylulose 5-phosphate: step 6/6. Its function is as follows. Catalyzes the conversion of 1-hydroxy-2-methyl-2-(E)-butenyl 4-diphosphate (HMBPP) into a mixture of isopentenyl diphosphate (IPP) and dimethylallyl diphosphate (DMAPP). Acts in the terminal step of the DOXP/MEP pathway for isoprenoid precursor biosynthesis. This Pseudomonas fluorescens (strain Pf0-1) protein is 4-hydroxy-3-methylbut-2-enyl diphosphate reductase.